The chain runs to 69 residues: DNA gyrase inhibitor YacG (69 aa).

Positions 13, 16, 32, and 36 each coordinate Zn(2+).

It belongs to the DNA gyrase inhibitor YacG family. In terms of assembly, interacts with GyrB. Requires Zn(2+) as cofactor.

Functionally, inhibits all the catalytic activities of DNA gyrase by preventing its interaction with DNA. Acts by binding directly to the C-terminal domain of GyrB, which probably disrupts DNA binding by the gyrase. This Neisseria meningitidis serogroup C / serotype 2a (strain ATCC 700532 / DSM 15464 / FAM18) protein is DNA gyrase inhibitor YacG.